The primary structure comprises 188 residues: Elongation factor P (188 aa).

Belongs to the elongation factor P family.

It is found in the cytoplasm. The protein operates within protein biosynthesis; polypeptide chain elongation. Involved in peptide bond synthesis. Stimulates efficient translation and peptide-bond synthesis on native or reconstituted 70S ribosomes in vitro. Probably functions indirectly by altering the affinity of the ribosome for aminoacyl-tRNA, thus increasing their reactivity as acceptors for peptidyl transferase. The sequence is that of Elongation factor P from Streptomyces coelicolor (strain ATCC BAA-471 / A3(2) / M145).